An 86-amino-acid chain; its full sequence is Mitochondrial import inner membrane translocase subunit Tim10 (86 aa).

The short motif at 29–54 (CQAKCIATAFRESELTKGEAVCLDRC) is the Twin CX3C motif element. Disulfide bonds link cysteine 29-cysteine 54 and cysteine 33-cysteine 50.

The protein belongs to the small Tim family. As to quaternary structure, heterohexamer; composed of 3 copies of tim-9/tin-9.1 and 3 copies of tim-10/tin-10, named soluble 70 kDa complex. The complex associates with the tim-22 component of the TIM22 complex. Interacts with multi-pass transmembrane proteins in transit.

It is found in the mitochondrion inner membrane. Its function is as follows. Mitochondrial intermembrane chaperone that participates in the import and insertion of multi-pass transmembrane proteins into the mitochondrial inner membrane. May also be required for the transfer of beta-barrel precursors from the TOM complex to the sorting and assembly machinery (SAM complex) of the outer membrane. Acts as a chaperone-like protein that protects the hydrophobic precursors from aggregation and guide them through the mitochondrial intermembrane space. This chain is Mitochondrial import inner membrane translocase subunit Tim10 (tin-10), found in Caenorhabditis elegans.